Here is a 181-residue protein sequence, read N- to C-terminus: Photosystem I assembly protein Ycf4 (181 aa).

The next 2 helical transmembrane spans lie at Y19–S39 and V62–I82.

Belongs to the Ycf4 family.

It localises to the plastid. The protein localises to the chloroplast thylakoid membrane. Functionally, seems to be required for the assembly of the photosystem I complex. The chain is Photosystem I assembly protein Ycf4 from Phaeodactylum tricornutum (strain CCAP 1055/1).